The sequence spans 99 residues: Large ribosomal subunit protein uL23 (99 aa).

It belongs to the universal ribosomal protein uL23 family. In terms of assembly, part of the 50S ribosomal subunit. Contacts protein L29, and trigger factor when it is bound to the ribosome.

One of the early assembly proteins it binds 23S rRNA. One of the proteins that surrounds the polypeptide exit tunnel on the outside of the ribosome. Forms the main docking site for trigger factor binding to the ribosome. This Rhodopseudomonas palustris (strain BisB5) protein is Large ribosomal subunit protein uL23.